A 432-amino-acid chain; its full sequence is UDP-N-acetylmuramoylalanine--D-glutamate ligase (432 aa).

Glycine 98–threonine 104 serves as a coordination point for ATP.

Belongs to the MurCDEF family.

Its subcellular location is the cytoplasm. The enzyme catalyses UDP-N-acetyl-alpha-D-muramoyl-L-alanine + D-glutamate + ATP = UDP-N-acetyl-alpha-D-muramoyl-L-alanyl-D-glutamate + ADP + phosphate + H(+). It functions in the pathway cell wall biogenesis; peptidoglycan biosynthesis. Cell wall formation. Catalyzes the addition of glutamate to the nucleotide precursor UDP-N-acetylmuramoyl-L-alanine (UMA). In Fusobacterium nucleatum subsp. nucleatum (strain ATCC 25586 / DSM 15643 / BCRC 10681 / CIP 101130 / JCM 8532 / KCTC 2640 / LMG 13131 / VPI 4355), this protein is UDP-N-acetylmuramoylalanine--D-glutamate ligase.